The sequence spans 1854 residues: Dystrophin, isoform D (1854 aa).

8 disordered regions span residues 1–65, 84–161, 240–352, 516–548, 595–650, 716–740, 783–830, and 1012–1036; these read MTTT…PIYA, GSTT…YEMP, QSPT…MSPA, LKPT…PTPS, TPGG…TSES, VMSK…PSTA, LKLQ…STTP, and VSDT…EQSR. Composition is skewed to low complexity over residues 11 to 37 and 84 to 96; these read QRQQ…QQHQ and GSTT…LQSS. Positions 143–157 are enriched in polar residues; it reads GLSSAQPATSASSGN. Residues 276 to 296 show a composition bias toward low complexity; that stretch reads QQQQQQQQAGINGQINGNGNQ. 2 stretches are compositionally biased toward polar residues: residues 331–345 and 518–536; these read TLSR…SSAD and PTST…SNTA. Gly residues predominate over residues 595–606; that stretch reads TPGGGVVGGQAA. Polar residues predominate over residues 716-727; sequence VMSKSNSSLGSV. Low complexity-rich tracts occupy residues 728–740 and 783–814; these read TTPS…PSTA and LKLQ…QQIQ. The span at 815 to 830 shows a compositional bias: polar residues; that stretch reads NGFASDDNSSSCSTTP. 2 Spectrin repeats span residues 936–1069 and 1072–1176; these read EHWN…RLDE and TKMR…VLCQ. Positions 1179 to 1209 are disordered; the sequence is AQQTHENGDDGRTTSNSGTIGPLPNLGQSVK. The WW domain occupies 1206 to 1239; sequence QSVKPPWERATTAANVPYYIDHERETTHWDHPEM. A ZZ-type zinc finger spans residues 1464-1520; it reads KHQAKCNICKEYPIVGFRYRCLKCFNFDMCQKCFFFGRNAKNHKLTHPMHEYCTTTT. Zn(2+) is bound by residues Cys-1469, Cys-1472, Cys-1484, Cys-1487, Cys-1493, Cys-1496, His-1506, and His-1510. Ser-1564 is subject to Phosphoserine. Disordered regions lie at residues 1673–1701 and 1744–1854; these read EQSG…GEQG and DEPN…ELQK. Composition is skewed to polar residues over residues 1682-1694 and 1765-1796; these read NGMQ…MTGL and ALNS…QQNG. Acidic residues predominate over residues 1815-1826; that stretch reads QELESINDDLED. A compositionally biased stretch (low complexity) spans 1827-1845; the sequence is SSSSNTTNTTTTTTTTATT.

In terms of assembly, component of the dystrophin associated protein complex (DAPC). Interacts with Dg, via the Dg WW domain binding sites. As to expression, during embryogenesis and in third instar larvae, expression is seen in pericardial cells of the dorsal vessel and in the ventral nerve cord. Expression is absent from both the embryonic and larval musculature.

The protein resides in the cell membrane. It is found in the sarcolemma. It localises to the cytoplasm. The protein localises to the cytoskeleton. Required for the maintenance of appropriate synaptic retrograde communication and the stabilization of muscle cell architecture or physiology. May play a role in anchoring the cytoskeleton to the plasma membrane. In Drosophila melanogaster (Fruit fly), this protein is Dystrophin, isoform D (Dys).